Reading from the N-terminus, the 36-residue chain is uncharacterized protein (36 aa).

Residues 1–14 (MNQLGSGPTKQGVA) show a composition bias toward polar residues. The segment at 1-36 (MNQLGSGPTKQGVATNTGSTGTTKNNSNLSGKGWVL) is disordered. The span at 15-36 (TNTGSTGTTKNNSNLSGKGWVL) shows a compositional bias: low complexity.

This is an uncharacterized protein from Dictyostelium discoideum (Social amoeba).